A 729-amino-acid chain; its full sequence is Neurochondrin (729 aa).

S2 carries the post-translational modification N-acetylserine. At S2 the chain carries Phosphoserine. 2 S-palmitoyl cysteine lipidation sites follow: C3 and C4. An Asymmetric dimethylarginine modification is found at R75. A Phosphoserine modification is found at S448.

Belongs to the neurochondrin family. As to quaternary structure, interacts with MCHR1. Interacts with SEMA4C. Interacts with DIAPH1 (via FH3 domain). Interacts with GRM5. In terms of processing, palmitoylated. Palmitoylation by ZDHHC1, ZDHHC3 and ZDHHC11 regulates the association of NCDN with endosome membranes. May also be palmitoylated by ZDHHC7. Expressed in the neuronal, chondral and bone tissues. Expressed in dendrites. Enriched in the brain in the surface layer I-IV. In brains, protein level increases in male but decreases in female with advancing age (at protein level). In adult brains, it is highly expressed in the forebrain and hindbrain. Highly expressed in the hippocampus, piriform cortex, septum, amygdaloid complex, medial geniculate nucleus, inferior colliculus, cerebellar nuclei and the nuclei of the Vth, VIIth, and XIIth cranial nerves. In bone tissues, it is expressed in osteoblasts and osteocytes.

The protein resides in the cytoplasm. The protein localises to the cytosol. Its subcellular location is the endosome membrane. It localises to the cell projection. It is found in the dendrite. The protein resides in the postsynapse. Probably involved in signal transduction, in the nervous system, via increasing cell surface localization of GRM5 and positively regulating its signaling. Required for the spatial learning process. Acts as a negative regulator of Ca(2+)-calmodulin-dependent protein kinase 2 (CaMK2) phosphorylation. May play a role in modulating melanin-concentrating hormone-mediated functions via its interaction with MCHR1 that interferes with G protein-coupled signal transduction. May be involved in bone metabolism. May also be involved in neurite outgrowth. The protein is Neurochondrin (Ncdn) of Mus musculus (Mouse).